The following is an 80-amino-acid chain: Exodeoxyribonuclease 7 small subunit (80 aa).

The protein belongs to the XseB family. In terms of assembly, heterooligomer composed of large and small subunits.

Its subcellular location is the cytoplasm. It catalyses the reaction Exonucleolytic cleavage in either 5'- to 3'- or 3'- to 5'-direction to yield nucleoside 5'-phosphates.. Functionally, bidirectionally degrades single-stranded DNA into large acid-insoluble oligonucleotides, which are then degraded further into small acid-soluble oligonucleotides. This chain is Exodeoxyribonuclease 7 small subunit, found in Salmonella paratyphi B (strain ATCC BAA-1250 / SPB7).